A 198-amino-acid polypeptide reads, in one-letter code: Recombination protein RecR (198 aa).

A C4-type zinc finger spans residues C57 to C72. Residues T80–P175 form the Toprim domain.

Belongs to the RecR family.

In terms of biological role, may play a role in DNA repair. It seems to be involved in an RecBC-independent recombinational process of DNA repair. It may act with RecF and RecO. This Burkholderia vietnamiensis (strain G4 / LMG 22486) (Burkholderia cepacia (strain R1808)) protein is Recombination protein RecR.